We begin with the raw amino-acid sequence, 479 residues long: Glycine betaine methyltransferase (479 aa).

It belongs to the trimethylamine methyltransferase family.

The enzyme catalyses Co(I)-[glycine betaine-specific corrinoid protein] + glycine betaine + H(+) = methyl-Co(III)-[glycine betaine-specific corrinoid protein] + N,N-dimethylglycine. In terms of biological role, methyltransferase able to methylate free cob(I)alamin in vitro, using glycine betaine as the methyl donor, yealding methylcobalamin (methylCbl) and dimethylglycine. In vivo, probably carries out the methylation of a corrinoid protein, likely the adjacently encoded DSY3155, with glycine betaine, to then supply methyl groups to tetrahydrofolate (THF) for ultimate conversion to carbon dioxide; oxidation of the methyl group would also provide reducing equivalents for anaerobic respiration. Thus, may function in the pathway that allows anaerobic methylotrophic growth of D.hafniense using glycine betaine. Cannot use quaternary amines such as carnitine and choline as substrates, nor tertiary amines such as dimethylglycine or trimethylamine. This chain is Glycine betaine methyltransferase, found in Desulfitobacterium hafniense (strain Y51).